A 162-amino-acid chain; its full sequence is Glutathione peroxidase-like peroxiredoxin GPX5 (162 aa).

C38 is modified (S-selanylcysteine). N87 is a catalytic residue.

Belongs to the glutathione peroxidase family. Cys-87 is S-selanylated when selenium levels are high. S-selanylation may increase or be important for glutathione peroxidase activity.

It localises to the cytoplasm. It catalyses the reaction 2 glutathione + H2O2 = glutathione disulfide + 2 H2O. The catalysed reaction is a hydroperoxide + [thioredoxin]-dithiol = an alcohol + [thioredoxin]-disulfide + H2O. Functionally, has thioredoxin peroxidase activity. May also have glutathione peroxidase activity, although this activity is controversial. Protects cells against reactive oxygen species, which may include photooxidative stress, hydrogen peroxide and organic hydroperoxides. This is Glutathione peroxidase-like peroxiredoxin GPX5 from Chlamydomonas reinhardtii (Chlamydomonas smithii).